An 832-amino-acid chain; its full sequence is Spindle pole body component alp6 (832 aa).

The interaction with mzt1 stretch occupies residues 1–186 (MSEIHVKTAL…STETSSVQHT (186 aa)). At T286 the chain carries Phosphothreonine.

This sequence belongs to the TUBGCP family. Part of the gamma-tubulin complex. Interacts directly with mzt1. Interacts with mto1. Interacts with mto2.

It localises to the cytoplasm. It is found in the cytoskeleton. Its subcellular location is the microtubule organizing center. The protein resides in the spindle pole body. Functionally, component of the gamma tubule complex that is required for the regulation of both interphase microtubules and mitotic bipolar spindles. This is Spindle pole body component alp6 (alp6) from Schizosaccharomyces pombe (strain 972 / ATCC 24843) (Fission yeast).